The sequence spans 272 residues: ATP synthase subunit a (272 aa).

The next 7 membrane-spanning stretches (helical) occupy residues 39–59, 103–123, 124–144, 152–172, 181–201, 221–241, and 242–262; these read GFWA…LIFI, VAPL…LKWI, PVDY…KIVP, FGIS…VKGV, FTPF…IIGL, VVFI…NVPW, and AIFH…LTVV.

Belongs to the ATPase A chain family. F-type ATPases have 2 components, CF(1) - the catalytic core - and CF(0) - the membrane proton channel. CF(1) has five subunits: alpha(3), beta(3), gamma(1), delta(1), epsilon(1). CF(0) has three main subunits: a(1), b(2) and c(9-12). The alpha and beta chains form an alternating ring which encloses part of the gamma chain. CF(1) is attached to CF(0) by a central stalk formed by the gamma and epsilon chains, while a peripheral stalk is formed by the delta and b chains.

It localises to the cell inner membrane. Key component of the proton channel; it plays a direct role in the translocation of protons across the membrane. The chain is ATP synthase subunit a from Ectopseudomonas mendocina (strain ymp) (Pseudomonas mendocina).